The chain runs to 179 residues: Large ribosomal subunit protein uL10 (179 aa).

The segment at 137–179 (KEELYAMLVGRVKAPITGLVFALSGILRNLVYVLNAIKEKKSE) is binds L7/L12 dimers.

As to quaternary structure, part of the ribosomal stalk of the 50S ribosomal subunit. The N-terminus interacts with L11 and 23S rRNA to form the base of the stalk. The C-terminus forms an elongated spine to which 3 L12 dimers bind in a sequential fashion forming a heptameric L10(L12)2(L12)2(L12)2 complex.

Its function is as follows. Forms part of the ribosomal stalk, playing a central role in the interaction of the ribosome with GTP-bound translation factors (such as IF-2, EF-Tu, EF-G and RF3). The sequence is that of Large ribosomal subunit protein uL10 (rplJ) from Thermotoga maritima (strain ATCC 43589 / DSM 3109 / JCM 10099 / NBRC 100826 / MSB8).